The primary structure comprises 214 residues: Metalloproteinase inhibitor 3 (214 aa).

Residues 1–26 form the signal peptide; that stretch reads MSVCALTLILGCFLLFLGDISKPAEG. Zn(2+) is bound at residue Cys-27. Involved in metalloproteinase-binding stretches follow at residues 27–30 and 91–92; these read CTCA and ES. 6 cysteine pairs are disulfide-bonded: Cys-27–Cys-94, Cys-29–Cys-121, Cys-39–Cys-146, Cys-148–Cys-195, Cys-153–Cys-158, and Cys-166–Cys-187. The 120-residue stretch at 27–146 folds into the NTR domain; that stretch reads CTCAPSHPQD…GLNHRYPLGC (120 aa).

Belongs to the protease inhibitor I35 (TIMP) family.

Its subcellular location is the secreted. The protein resides in the extracellular space. It localises to the extracellular matrix. Complexes with metalloproteinases (such as collagenases) and irreversibly inactivates them by binding to their catalytic zinc cofactor. May form part of a tissue-specific acute response to remodeling stimuli. This chain is Metalloproteinase inhibitor 3 (timp3), found in Xenopus laevis (African clawed frog).